We begin with the raw amino-acid sequence, 247 residues long: Probable transcriptional regulatory protein DVU_2259 (247 aa).

The disordered stretch occupies residues 1-22 (MAGHSKWANIQHRKGRQDAKRG).

This sequence belongs to the TACO1 family.

Its subcellular location is the cytoplasm. The sequence is that of Probable transcriptional regulatory protein DVU_2259 from Nitratidesulfovibrio vulgaris (strain ATCC 29579 / DSM 644 / CCUG 34227 / NCIMB 8303 / VKM B-1760 / Hildenborough) (Desulfovibrio vulgaris).